The primary structure comprises 259 residues: UPF0246 protein VSAL_I2547 (259 aa).

The protein belongs to the UPF0246 family.

The sequence is that of UPF0246 protein VSAL_I2547 from Aliivibrio salmonicida (strain LFI1238) (Vibrio salmonicida (strain LFI1238)).